The chain runs to 445 residues: Xylose isomerase (445 aa).

Residues His107 and Asp110 contribute to the active site. Positions 238, 274, 277, 302, 313, 315, and 345 each coordinate Mg(2+).

This sequence belongs to the xylose isomerase family. As to quaternary structure, homotetramer. Mg(2+) is required as a cofactor.

Its subcellular location is the cytoplasm. It carries out the reaction alpha-D-xylose = alpha-D-xylulofuranose. The protein is Xylose isomerase of Bacillus pumilus (strain SAFR-032).